The chain runs to 448 residues: Exodeoxyribonuclease 7 large subunit (448 aa).

The protein belongs to the XseA family. Heterooligomer composed of large and small subunits.

The protein localises to the cytoplasm. It catalyses the reaction Exonucleolytic cleavage in either 5'- to 3'- or 3'- to 5'-direction to yield nucleoside 5'-phosphates.. Bidirectionally degrades single-stranded DNA into large acid-insoluble oligonucleotides, which are then degraded further into small acid-soluble oligonucleotides. The protein is Exodeoxyribonuclease 7 large subunit of Histophilus somni (strain 129Pt) (Haemophilus somnus).